The sequence spans 200 residues: Recombination protein RecR (200 aa).

The segment at 57-72 (CSECRTFTEEDTCAIC) adopts a C4-type zinc-finger fold. One can recognise a Toprim domain in the interval 81–176 (GEMCIVESPA…PASRIAHGVP (96 aa)).

This sequence belongs to the RecR family.

Functionally, may play a role in DNA repair. It seems to be involved in an RecBC-independent recombinational process of DNA repair. It may act with RecF and RecO. The protein is Recombination protein RecR of Aliivibrio fischeri (strain ATCC 700601 / ES114) (Vibrio fischeri).